A 240-amino-acid chain; its full sequence is Cysteine-rich venom protein catrin (240 aa).

Residues 1–19 form the signal peptide; it reads MIAFIVLPILAAVLQQSSG. Residues 38–166 form the SCP domain; that stretch reads VDLHNFLRRS…KYSYFYVCQY (129 aa). 8 disulfides stabilise this stretch: Cys-75-Cys-153, Cys-92-Cys-167, Cys-148-Cys-164, Cys-186-Cys-193, Cys-189-Cys-198, Cys-202-Cys-235, Cys-211-Cys-229, and Cys-220-Cys-233. Residues 202–235 enclose the ShKT domain; sequence CTKEDKYTNCKSLVQQAGCQDKQMQSDCPAICFC.

It belongs to the CRISP family. In terms of tissue distribution, expressed by the venom gland.

It is found in the secreted. Catrin-2 weakly blocks contraction of smooth muscle elicited by high potassium-induced depolarization, but does not block caffeine-stimulated contraction. Catrin-1 has no significant effect. May target voltage-gated calcium channels on smooth muscle. This is Cysteine-rich venom protein catrin from Crotalus atrox (Western diamondback rattlesnake).